The chain runs to 353 residues: MIRFSESITSQQDIDVVVGENALSYLREIQNKKAIFYSSSVNIDFIKPHLEGEYTLVPIKDGEEAKDIQYSLELLKVLFDGGFDRGDYVIAIGGGSVTDTVGFIASTYMRGLNLINVPTTLLGMVDAGIGGKNGVNFGRIKNIIGTFYQPRAIIADLRFLISLPSEEVRKGLAEVIKYGLVLDKELYDFLALNKNSVLSKDPESLEYVVQRSIQDKLSVVKEDERETKGVRIVLNFGHTIGHAIEAGSGFSIPHGYAISVGMVCEAKIAEEMGYSEEGVVEDTVWILSHYNLPISIDELSSKIDLKEALFALSKDKKVRNGVLLMPFPTRIGDWKRVEVPIETLKGFAEQCLK.

NAD(+) contacts are provided by residues 61 to 66 (DGEEAK), 119 to 120 (TT), Lys-132, and Lys-141. Positions 174, 238, and 254 each coordinate Zn(2+).

It belongs to the sugar phosphate cyclases superfamily. Dehydroquinate synthase family. The cofactor is Co(2+). Zn(2+) is required as a cofactor. It depends on NAD(+) as a cofactor.

It is found in the cytoplasm. The enzyme catalyses 7-phospho-2-dehydro-3-deoxy-D-arabino-heptonate = 3-dehydroquinate + phosphate. It participates in metabolic intermediate biosynthesis; chorismate biosynthesis; chorismate from D-erythrose 4-phosphate and phosphoenolpyruvate: step 2/7. Functionally, catalyzes the conversion of 3-deoxy-D-arabino-heptulosonate 7-phosphate (DAHP) to dehydroquinate (DHQ). The polypeptide is 3-dehydroquinate synthase (Sulfolobus acidocaldarius (strain ATCC 33909 / DSM 639 / JCM 8929 / NBRC 15157 / NCIMB 11770)).